The chain runs to 195 residues: Probable GTP-binding protein EngB (195 aa).

The region spanning 22–195 (GLPEIALAGR…WNAILAKINK (174 aa)) is the EngB-type G domain. GTP-binding positions include 30-37 (GRSNVGKS), 57-61 (GKTQT), 75-78 (DVPG), 142-145 (TKAD), and 174-176 (FSS). Mg(2+)-binding residues include Ser-37 and Thr-59.

Belongs to the TRAFAC class TrmE-Era-EngA-EngB-Septin-like GTPase superfamily. EngB GTPase family. Requires Mg(2+) as cofactor.

Functionally, necessary for normal cell division and for the maintenance of normal septation. The protein is Probable GTP-binding protein EngB of Bacillus pumilus (strain SAFR-032).